The primary structure comprises 435 residues: Mitochondrial association factor 1 form a1 (435 aa).

The first 20 residues, 1 to 20 (MWRIWRCRLSFLFATGCLLG), serve as a signal peptide directing secretion. The Vacuolar portion of the chain corresponds to 21–95 (ALTAGLGSQM…SVTARRRRNR (75 aa)). Residues 43-88 (GVADASQEAGDVVEERTERTEEQVFAPGPPRRHSSESLFPRNASVT) are disordered. Residues 55–64 (VEERTERTEE) show a composition bias toward basic and acidic residues. Residues 96 to 116 (RIAPIATAVGVAVILAALYVL) traverse the membrane as a helical segment. The Cytoplasmic segment spans residues 117-435 (RRRRAQPPQE…ERKYKFPQGD (319 aa)). The interval 120 to 162 (RAQPPQEPEPPTRLRTPRPRAPSEQQQPSESEPPAEVPMTPDP) is disordered. Over residues 141–153 (PSEQQQPSESEPP) the composition is skewed to low complexity.

As to quaternary structure, interacts with host SAMM50.

It is found in the parasitophorous vacuole membrane. In terms of biological role, during host cell infection by tachyzoites, does not play a role in tethering the parasitophorous vacuole to the host mitochondria, probably because it does not bind host mitochondrial import protein TOMM70. The sequence is that of Mitochondrial association factor 1 form a1 from Toxoplasma gondii.